The primary structure comprises 210 residues: Uracil phosphoribosyltransferase (210 aa).

5-phospho-alpha-D-ribose 1-diphosphate contacts are provided by residues Arg78, Arg103, and 130–138 (DPMLATGGT). Residues Ile193 and 198–200 (GDA) each bind uracil. 5-phospho-alpha-D-ribose 1-diphosphate is bound at residue Asp199.

The protein belongs to the UPRTase family. Requires Mg(2+) as cofactor.

It catalyses the reaction UMP + diphosphate = 5-phospho-alpha-D-ribose 1-diphosphate + uracil. Its pathway is pyrimidine metabolism; UMP biosynthesis via salvage pathway; UMP from uracil: step 1/1. With respect to regulation, allosterically activated by GTP. Its function is as follows. Catalyzes the conversion of uracil and 5-phospho-alpha-D-ribose 1-diphosphate (PRPP) to UMP and diphosphate. The protein is Uracil phosphoribosyltransferase of Stenotrophomonas maltophilia (strain R551-3).